The primary structure comprises 400 residues: Probable RNA polymerase sigma factor RfaY (400 aa).

The short motif at 62–75 is the Polymerase core binding element; it reads WQRLAQLHQPASFL. The segment at residues 165-184 is a DNA-binding region (H-T-H motif); the sequence is SDAAVRKRLSRARATVRNEL.

It belongs to the sigma-70 factor family. ECF subfamily.

Sigma factors are initiation factors that promote the attachment of RNA polymerase to specific initiation sites and are then released. This sigma factor is involved in lipopolysaccharide biosynthesis and pathogenicity. This Xanthomonas campestris pv. campestris (strain ATCC 33913 / DSM 3586 / NCPPB 528 / LMG 568 / P 25) protein is Probable RNA polymerase sigma factor RfaY (rfaY).